Reading from the N-terminus, the 308-residue chain is Lipoyl synthase (308 aa).

[4Fe-4S] cluster-binding residues include Cys48, Cys53, Cys59, Cys74, Cys78, Cys81, and Ser287. The Radical SAM core domain maps to 60–277; the sequence is WSRHTATYLA…RSVGEALGLF (218 aa).

It belongs to the radical SAM superfamily. Lipoyl synthase family. [4Fe-4S] cluster is required as a cofactor.

Its subcellular location is the cytoplasm. The catalysed reaction is [[Fe-S] cluster scaffold protein carrying a second [4Fe-4S](2+) cluster] + N(6)-octanoyl-L-lysyl-[protein] + 2 oxidized [2Fe-2S]-[ferredoxin] + 2 S-adenosyl-L-methionine + 4 H(+) = [[Fe-S] cluster scaffold protein] + N(6)-[(R)-dihydrolipoyl]-L-lysyl-[protein] + 4 Fe(3+) + 2 hydrogen sulfide + 2 5'-deoxyadenosine + 2 L-methionine + 2 reduced [2Fe-2S]-[ferredoxin]. It participates in protein modification; protein lipoylation via endogenous pathway; protein N(6)-(lipoyl)lysine from octanoyl-[acyl-carrier-protein]: step 2/2. Functionally, catalyzes the radical-mediated insertion of two sulfur atoms into the C-6 and C-8 positions of the octanoyl moiety bound to the lipoyl domains of lipoate-dependent enzymes, thereby converting the octanoylated domains into lipoylated derivatives. In Chlamydia muridarum (strain MoPn / Nigg), this protein is Lipoyl synthase.